A 104-amino-acid polypeptide reads, in one-letter code: Co-chaperonin GroES 2 (104 aa).

Belongs to the GroES chaperonin family. Heptamer of 7 subunits arranged in a ring. Interacts with the chaperonin GroEL.

The protein resides in the cytoplasm. Together with the chaperonin GroEL, plays an essential role in assisting protein folding. The GroEL-GroES system forms a nano-cage that allows encapsulation of the non-native substrate proteins and provides a physical environment optimized to promote and accelerate protein folding. GroES binds to the apical surface of the GroEL ring, thereby capping the opening of the GroEL channel. The protein is Co-chaperonin GroES 2 of Bradyrhizobium diazoefficiens (strain JCM 10833 / BCRC 13528 / IAM 13628 / NBRC 14792 / USDA 110).